The sequence spans 165 residues: Peptide methionine sulfoxide reductase MsrA (165 aa).

The active site involves cysteine 11.

It belongs to the MsrA Met sulfoxide reductase family.

It catalyses the reaction L-methionyl-[protein] + [thioredoxin]-disulfide + H2O = L-methionyl-(S)-S-oxide-[protein] + [thioredoxin]-dithiol. It carries out the reaction [thioredoxin]-disulfide + L-methionine + H2O = L-methionine (S)-S-oxide + [thioredoxin]-dithiol. Functionally, has an important function as a repair enzyme for proteins that have been inactivated by oxidation. Catalyzes the reversible oxidation-reduction of methionine sulfoxide in proteins to methionine. The chain is Peptide methionine sulfoxide reductase MsrA from Ureaplasma urealyticum serovar 10 (strain ATCC 33699 / Western).